An 810-amino-acid chain; its full sequence is Myoneurin (810 aa).

The region spanning 24–91 is the BTB domain; that stretch reads CDCTVSIGQA…IYTGDLNMDR (68 aa). 2 disordered regions span residues 122 to 146 and 169 to 466; these read NVGS…DYEP and VSMD…VKPV. Residues 173–183 are compositionally biased toward polar residues; the sequence is EAQSSSEQTPQ. Basic residues-rich tracts occupy residues 185 to 194 and 211 to 225; these read VGKRGRKPKT and GRGR…RPRV. Positions 229-238 are enriched in polar residues; that stretch reads SSDSTDQSPA. The span at 243–253 shows a compositional bias: low complexity; sequence SPNGSSTSRGS. Residues 254 to 266 constitute a DNA-binding region (a.T hook 1); the sequence is GRPRGRPRVRPLS. A compositionally biased stretch (basic and acidic residues) spans 270 to 308; it reads EDPRNVEDDPAANKDQEVEKGNEEQKKETGEKDDGKNDT. The a.T hook 2 DNA-binding region spans 318–330; it reads KRGRGRPRIKPVS. Residues 331–346 show a composition bias toward polar residues; sequence TEDQTTNSENVTTNAE. Positions 350–361 are enriched in basic and acidic residues; the sequence is EPAKTKDSEGTG. Residues 361 to 373 constitute a DNA-binding region (a.T hook 3); that stretch reads GRKRGRPRSKPVS. The span at 386 to 396 shows a compositional bias: acidic residues; the sequence is SGEEAGEETSQ. A compositionally biased stretch (basic residues) spans 419-428; it reads ISKRKRILSR. Residues 428 to 432 carry the Nuclear localization signal motif; sequence RKLKE. Over residues 435-460 the composition is skewed to acidic residues; sequence AGDEEEEEEEEMDDEFENDNEDWAGE. 7 C2H2-type zinc fingers span residues 472–494, 500–522, 528–551, 557–579, 585–607, 613–635, and 641–663; these read PICN…MRIH, YQCT…MRIH, FTCT…RMHH, YKCE…IRKH, YECG…KRRH, YICD…NRKH, and YICL…MDVH.

The protein belongs to the krueppel C2H2-type zinc-finger protein family.

Its subcellular location is the nucleus. This Danio rerio (Zebrafish) protein is Myoneurin (mynn).